Consider the following 573-residue polypeptide: Urease subunit alpha (573 aa).

Residues 136-573 (GAIDCHVHLI…LPMAQRYFLF (438 aa)) enclose the Urease domain. Residues H141, H143, and K224 each contribute to the Ni(2+) site. N6-carboxylysine is present on K224. H226 is a binding site for substrate. Ni(2+) contacts are provided by H253 and H279. The active-site Proton donor is the H327. Residue D367 coordinates Ni(2+).

This sequence belongs to the metallo-dependent hydrolases superfamily. Urease alpha subunit family. Heterotrimer of UreA (gamma), UreB (beta) and UreC (alpha) subunits. Three heterotrimers associate to form the active enzyme. Ni cation is required as a cofactor. In terms of processing, carboxylation allows a single lysine to coordinate two nickel ions.

Its subcellular location is the cytoplasm. It carries out the reaction urea + 2 H2O + H(+) = hydrogencarbonate + 2 NH4(+). It functions in the pathway nitrogen metabolism; urea degradation; CO(2) and NH(3) from urea (urease route): step 1/1. The sequence is that of Urease subunit alpha from Mycolicibacterium vanbaalenii (strain DSM 7251 / JCM 13017 / BCRC 16820 / KCTC 9966 / NRRL B-24157 / PYR-1) (Mycobacterium vanbaalenii).